Consider the following 908-residue polypeptide: NADH-quinone oxidoreductase subunit G (908 aa).

One can recognise a 2Fe-2S ferredoxin-type domain in the interval 2–83 (ATIHVDGKEY…GTFISIDDEE (82 aa)). Residues cysteine 34, cysteine 45, cysteine 48, and cysteine 67 each contribute to the [2Fe-2S] cluster site. Positions 83–122 (EAKQFRESVVEWLMTNHPHDCPVCEEGGNCHLQDMTVMTG) constitute a 4Fe-4S His(Cys)3-ligated-type domain. Residues histidine 99, cysteine 103, cysteine 106, cysteine 112, cysteine 151, cysteine 154, cysteine 157, cysteine 201, cysteine 228, cysteine 231, cysteine 235, and cysteine 263 each contribute to the [4Fe-4S] cluster site. One can recognise a 4Fe-4S Mo/W bis-MGD-type domain in the interval 221–277 (MQFAPSICQQCSIGCNISPGERYGELRRIENRYNGTVNHYFLCDRGRFGYGYVNLKD).

Belongs to the complex I 75 kDa subunit family. In terms of assembly, composed of 13 different subunits. Subunits NuoCD, E, F, and G constitute the peripheral sector of the complex. Requires [2Fe-2S] cluster as cofactor. [4Fe-4S] cluster serves as cofactor.

It is found in the cytoplasm. It localises to the cell inner membrane. The catalysed reaction is a quinone + NADH + 5 H(+)(in) = a quinol + NAD(+) + 4 H(+)(out). Its function is as follows. NDH-1 shuttles electrons from NADH, via FMN and iron-sulfur (Fe-S) centers, to quinones in the respiratory chain. The immediate electron acceptor for the enzyme in this species is believed to be ubiquinone. Couples the redox reaction to proton translocation (for every two electrons transferred, four hydrogen ions are translocated across the cytoplasmic membrane), and thus conserves the redox energy in a proton gradient. This Escherichia coli (strain K12) protein is NADH-quinone oxidoreductase subunit G (nuoG).